The sequence spans 151 residues: UPF0756 membrane protein GK2737 (151 aa).

Transmembrane regions (helical) follow at residues 5–25 (VLFL…SLIV), 53–73 (WGVT…EIGF), 79–99 (SLQS…ALIA), and 121–141 (ILAV…AGIA).

The protein belongs to the UPF0756 family.

It localises to the cell membrane. This Geobacillus kaustophilus (strain HTA426) protein is UPF0756 membrane protein GK2737.